The chain runs to 382 residues: Dual-specificity RNA methyltransferase RlmN (382 aa).

Glu-94 functions as the Proton acceptor in the catalytic mechanism. Residues 100-336 enclose the Radical SAM core domain; that stretch reads EANRGTLCVS…NTITRKTRGD (237 aa). Cys-107 and Cys-342 are disulfide-bonded. Residues Cys-114, Cys-118, and Cys-121 each coordinate [4Fe-4S] cluster. S-adenosyl-L-methionine is bound by residues 168–169, Ser-200, 222–224, and Asn-299; these read GE and SLH. Residue Cys-342 is the S-methylcysteine intermediate of the active site.

The protein belongs to the radical SAM superfamily. RlmN family. [4Fe-4S] cluster serves as cofactor.

The protein localises to the cytoplasm. The enzyme catalyses adenosine(2503) in 23S rRNA + 2 reduced [2Fe-2S]-[ferredoxin] + 2 S-adenosyl-L-methionine = 2-methyladenosine(2503) in 23S rRNA + 5'-deoxyadenosine + L-methionine + 2 oxidized [2Fe-2S]-[ferredoxin] + S-adenosyl-L-homocysteine. It catalyses the reaction adenosine(37) in tRNA + 2 reduced [2Fe-2S]-[ferredoxin] + 2 S-adenosyl-L-methionine = 2-methyladenosine(37) in tRNA + 5'-deoxyadenosine + L-methionine + 2 oxidized [2Fe-2S]-[ferredoxin] + S-adenosyl-L-homocysteine. Functionally, specifically methylates position 2 of adenine 2503 in 23S rRNA and position 2 of adenine 37 in tRNAs. m2A2503 modification seems to play a crucial role in the proofreading step occurring at the peptidyl transferase center and thus would serve to optimize ribosomal fidelity. This Legionella pneumophila (strain Paris) protein is Dual-specificity RNA methyltransferase RlmN.